The following is a 509-amino-acid chain: uncharacterized protein (509 aa).

The RNase NYN domain maps to 358–480; that stretch reads RRIVIIDAIS…IIPFIVENGE (123 aa).

This is an uncharacterized protein from Methanocaldococcus jannaschii (strain ATCC 43067 / DSM 2661 / JAL-1 / JCM 10045 / NBRC 100440) (Methanococcus jannaschii).